The following is a 63-amino-acid chain: Small ribosomal subunit protein eS31 (63 aa).

Residues Cys31, Cys34, Cys50, and Cys53 each contribute to the Zn(2+) site.

This sequence belongs to the eukaryotic ribosomal protein eS31 family. Part of the 30S ribosomal subunit. Zn(2+) is required as a cofactor.

In Aeropyrum pernix (strain ATCC 700893 / DSM 11879 / JCM 9820 / NBRC 100138 / K1), this protein is Small ribosomal subunit protein eS31 (rps27ae).